Here is a 187-residue protein sequence, read N- to C-terminus: MTGSVDRPDQNRGERSMKSPGLDLVRRTLDEARAAARARGQDAGRGRVASVASGRVAGRRRSWSGPGPDIRDPQPLGKAARELAKKRGWSVRVAEGMVLGQWSAVVGHQIAEHARPTALNDGVLSVIAESTAWATQLRIMQAQLLAKIAAAVGNDVVRSLKITGPAAPSWRKGPRHIAGRGPRDTYG.

2 stretches are compositionally biased toward basic and acidic residues: residues 1–17 (MTGS…ERSM) and 24–45 (LVRR…DAGR). 2 disordered regions span residues 1–75 (MTGS…DPQP) and 168–187 (PSWR…DTYG).

The protein belongs to the UPF0232 family.

The sequence is that of UPF0232 protein JTY_0004 from Mycobacterium bovis (strain BCG / Tokyo 172 / ATCC 35737 / TMC 1019).